A 330-amino-acid polypeptide reads, in one-letter code: Phosphate acyltransferase (330 aa).

It belongs to the PlsX family. Homodimer. Probably interacts with PlsY.

It localises to the cytoplasm. It catalyses the reaction a fatty acyl-[ACP] + phosphate = an acyl phosphate + holo-[ACP]. It participates in lipid metabolism; phospholipid metabolism. Catalyzes the reversible formation of acyl-phosphate (acyl-PO(4)) from acyl-[acyl-carrier-protein] (acyl-ACP). This enzyme utilizes acyl-ACP as fatty acyl donor, but not acyl-CoA. The polypeptide is Phosphate acyltransferase (Bacillus cereus (strain B4264)).